We begin with the raw amino-acid sequence, 462 residues long: NAD-capped RNA hydrolase NUDT12 (462 aa).

ANK repeat units lie at residues 11–40 (EIVTQFHCSAAEGDIAKLTGILSHSPSLLN), 45–74 (NGWTALMYAARNGHPEIVQFLLEKGCDRSI), and 78–98 (SRQTALDIAVFWGYKHIANLL). The residue at position 185 (K185) is an N6-succinyllysine. The Zn(2+) site is built by C284 and C287. K292 carries the post-translational modification N6-succinyllysine. Zn(2+) contacts are provided by C302 and C307. Substrate contacts are provided by residues Y318, 354–356 (AGF), E370, E374, and E415. The 135-residue stretch at 319–453 (PRVDPVVIMQ…SRAIAHQLIK (135 aa)) folds into the Nudix hydrolase domain. Positions 354, 370, 374, and 415 each coordinate Mg(2+). The Nudix box motif lies at 355–376 (GFIEPGETIEDAVRREVEEESG). Positions 460-462 (PNL) match the Microbody targeting signal motif.

The protein belongs to the Nudix hydrolase family. NudC subfamily. In terms of assembly, homodimer. Homodimerization is essential for its catalytic activity and protein stability. Interacts (via ANK repeats) with BLMH. Requires Mg(2+) as cofactor. Zn(2+) serves as cofactor.

Its subcellular location is the cytoplasm. The protein localises to the peroxisome. The protein resides in the cytoplasmic granule. The catalysed reaction is a 5'-end NAD(+)-phospho-ribonucleoside in mRNA + H2O = a 5'-end phospho-adenosine-phospho-ribonucleoside in mRNA + beta-nicotinamide D-ribonucleotide + 2 H(+). It carries out the reaction NAD(+) + H2O = beta-nicotinamide D-ribonucleotide + AMP + 2 H(+). It catalyses the reaction NADH + H2O = reduced beta-nicotinamide D-ribonucleotide + AMP + 2 H(+). The enzyme catalyses NADPH + H2O = reduced beta-nicotinamide D-ribonucleotide + adenosine 2',5'-bisphosphate + 2 H(+). Functionally, mRNA decapping enzyme that specifically removes the nicotinamide adenine dinucleotide (NAD) cap from a subset of mRNAs by hydrolyzing the diphosphate linkage to produce nicotinamide mononucleotide (NMN) and 5' monophosphate mRNA. The NAD-cap is present at the 5'-end of some RNAs; in contrast to the canonical N7 methylguanosine (m7G) cap, the NAD cap promotes mRNA decay. Preferentially acts on NAD-capped transcripts in response to nutrient stress. Also acts on free nicotinamide adenine dinucleotide molecules: hydrolyzes NAD(H) into NMN(H) and AMP, and NADPH into NMNH and 2',5'-ADP. May act to regulate the concentration of peroxisomal nicotinamide nucleotide cofactors required for oxidative metabolism in this organelle. Regulates the levels of circadian clock components PER1, PER2, PER3 and CRY2 in the liver. The chain is NAD-capped RNA hydrolase NUDT12 from Pongo abelii (Sumatran orangutan).